A 382-amino-acid chain; its full sequence is 3-dehydroquinate synthase (382 aa).

NAD(+) contacts are provided by residues 115-119, 139-140, lysine 152, and lysine 161; these read GVVGD and TS. Zn(2+) contacts are provided by glutamate 194, histidine 256, and histidine 274.

Belongs to the sugar phosphate cyclases superfamily. Dehydroquinate synthase family. It depends on Co(2+) as a cofactor. Requires Zn(2+) as cofactor. The cofactor is NAD(+).

Its subcellular location is the cytoplasm. It carries out the reaction 7-phospho-2-dehydro-3-deoxy-D-arabino-heptonate = 3-dehydroquinate + phosphate. Its pathway is metabolic intermediate biosynthesis; chorismate biosynthesis; chorismate from D-erythrose 4-phosphate and phosphoenolpyruvate: step 2/7. In terms of biological role, catalyzes the conversion of 3-deoxy-D-arabino-heptulosonate 7-phosphate (DAHP) to dehydroquinate (DHQ). The chain is 3-dehydroquinate synthase from Rhodopseudomonas palustris (strain BisB18).